The primary structure comprises 122 residues: Large ribosomal subunit protein bL20c (122 aa).

Belongs to the bacterial ribosomal protein bL20 family.

The protein resides in the plastid. Its subcellular location is the chloroplast. Functionally, binds directly to 23S ribosomal RNA and is necessary for the in vitro assembly process of the 50S ribosomal subunit. It is not involved in the protein synthesizing functions of that subunit. This Dioscorea elephantipes (Elephant's foot yam) protein is Large ribosomal subunit protein bL20c.